The chain runs to 563 residues: MNTKELIASELSSIIDSLDQEAILKLLETPKNSEMGDIAFPAFSLAKVERKAPQMIAAELAEKMNSQAFEKVVATGPYVNFFLDKSAISAQVLQAVTTEKEHYADQNIGKQENVVIDMSSPNIAKPFSIGHLRSTVIGDSLSHIFQKIGYQTVKVNHLGDWGKQFGMLIVAYKKWGDEEAVKAHPIDELLKLYVRINAEAENDPSLDEEAREWFRKLENGDEEALALWQWFRDESLVEFNRLYNELKVEFDSYNGEAFYNDKMDAVVDILSEKGLLLESEGAQVVNLEKYGIEHPALIKKSDGATLYITRDLAAALYRKNEYQFAKSIYVVGQEQSAHFKQLKAVLQEMGYDWSDDITHVPFGLVTKEGKKLSTRKGNVILLEPTVAEAVSRAKVQIEAKNPELENKDQVAHAVGVGAIKFYDLKTDRTNGYDFDLEAMVSFEGETGPYVQYAYARIQSILRKADFKPETAGNYSLNDTESWEIIKLIQDFPRIINRAADNFEPSIIAKFAISLAQSFNKYYAHTRILDESPERDSRLALSYATAVVLKEALRLLGVEAPEKM.

The short motif at 121 to 131 is the 'HIGH' region element; that stretch reads PNIAKPFSIGH.

It belongs to the class-I aminoacyl-tRNA synthetase family. As to quaternary structure, monomer.

The protein localises to the cytoplasm. The enzyme catalyses tRNA(Arg) + L-arginine + ATP = L-arginyl-tRNA(Arg) + AMP + diphosphate. The chain is Arginine--tRNA ligase from Streptococcus pneumoniae (strain ATCC BAA-255 / R6).